We begin with the raw amino-acid sequence, 99 residues long: Keratinocyte differentiation-associated protein (99 aa).

A signal peptide spans 1 to 22 (MKIPVLPAVVLLSLLVLHSAQG).

As to expression, highly expressed in skin and detected at lower levels in thymus. In skin, found exclusively in lamellar granules of granular keratinocytes and in the intracellular space of the stratum corneum. Also highly expressed in oral mucosa, tongue, esophagus, and stomach, and at much lower levels in bladder and uterus. Not detected in gastrointestinal mucosa.

Its subcellular location is the secreted. Functionally, may act as a soluble regulator of keratinocyte differentiation. May play an important role in embryonic skin morphogenesis. This Homo sapiens (Human) protein is Keratinocyte differentiation-associated protein (KRTDAP).